Consider the following 63-residue polypeptide: UPF0391 membrane protein lpg2415 (63 aa).

2 consecutive transmembrane segments (helical) span residues 4-24 (WALIFLIVAIVAGLFGFRGVA) and 33-53 (VLFFLFIVMFIVLLVFSLLGG).

It belongs to the UPF0391 family.

The protein resides in the cell membrane. This Legionella pneumophila subsp. pneumophila (strain Philadelphia 1 / ATCC 33152 / DSM 7513) protein is UPF0391 membrane protein lpg2415.